The primary structure comprises 197 residues: UPF0228 protein MA_3125 (197 aa).

It belongs to the UPF0228 family.

In Methanosarcina acetivorans (strain ATCC 35395 / DSM 2834 / JCM 12185 / C2A), this protein is UPF0228 protein MA_3125.